We begin with the raw amino-acid sequence, 253 residues long: Solute carrier family 66 member 2 (253 aa).

The next 6 helical transmembrane spans lie at 7–27 (GWLL…AMVF), 49–69 (FSTY…LFWF), 72–92 (HFES…LLML), 125–145 (FADY…ITYL), 150–170 (ALFV…LGVP), and 214–234 (VCGL…YVFT). In terms of domain architecture, PQ-loop 1 spans 14-80 (HQLVSWGAAG…RHFESPLLWQ (67 aa)). One can recognise a PQ-loop 2 domain in the interval 160–215 (AVLTEAMLGVPQLYRNHRHQSTEGMSIKMVLMWTSGDTFKTAYFLLNGAPLQFSVC).

It localises to the membrane. The chain is Solute carrier family 66 member 2 (SLC66A2) from Bos taurus (Bovine).